We begin with the raw amino-acid sequence, 225 residues long: NAD(P)H-quinone oxidoreductase subunit K, chloroplastic (225 aa).

[4Fe-4S] cluster-binding residues include cysteine 43, cysteine 44, cysteine 108, and cysteine 139.

It belongs to the complex I 20 kDa subunit family. In terms of assembly, NDH is composed of at least 16 different subunits, 5 of which are encoded in the nucleus. It depends on [4Fe-4S] cluster as a cofactor.

The protein localises to the plastid. The protein resides in the chloroplast thylakoid membrane. The enzyme catalyses a plastoquinone + NADH + (n+1) H(+)(in) = a plastoquinol + NAD(+) + n H(+)(out). The catalysed reaction is a plastoquinone + NADPH + (n+1) H(+)(in) = a plastoquinol + NADP(+) + n H(+)(out). In terms of biological role, NDH shuttles electrons from NAD(P)H:plastoquinone, via FMN and iron-sulfur (Fe-S) centers, to quinones in the photosynthetic chain and possibly in a chloroplast respiratory chain. The immediate electron acceptor for the enzyme in this species is believed to be plastoquinone. Couples the redox reaction to proton translocation, and thus conserves the redox energy in a proton gradient. In Oryza nivara (Indian wild rice), this protein is NAD(P)H-quinone oxidoreductase subunit K, chloroplastic.